Here is a 407-residue protein sequence, read N- to C-terminus: Probable succinyl-diaminopimelate desuccinylase (407 aa).

Position 72 (His72) interacts with Zn(2+). Asp74 is a catalytic residue. A Zn(2+)-binding site is contributed by Asp105. Glu139 functions as the Proton acceptor in the catalytic mechanism. Zn(2+) is bound by residues Glu140, Glu165, and His378.

The protein belongs to the peptidase M20A family. It depends on Zn(2+) as a cofactor. Requires Co(2+) as cofactor.

The catalysed reaction is N-succinyl-(2S,6S)-2,6-diaminopimelate + H2O = (2S,6S)-2,6-diaminopimelate + succinate. Its pathway is amino-acid biosynthesis; L-lysine biosynthesis via DAP pathway; LL-2,6-diaminopimelate from (S)-tetrahydrodipicolinate (succinylase route): step 3/3. The chain is Probable succinyl-diaminopimelate desuccinylase (dapE) from Staphylococcus aureus (strain N315).